We begin with the raw amino-acid sequence, 91 residues long: Putative defensin-like protein 145 (91 aa).

The first 26 residues, 1 to 26, serve as a signal peptide directing secretion; the sequence is MNKNIIFSFTVLTLFVIFVQVTGVIG. Residues Asn-35 and Asn-68 are each glycosylated (N-linked (GlcNAc...) asparagine). Disulfide bonds link Cys-39–Cys-84, Cys-52–Cys-74, Cys-57–Cys-78, and Cys-61–Cys-80.

The protein belongs to the DEFL family.

It localises to the secreted. The polypeptide is Putative defensin-like protein 145 (LCR2) (Arabidopsis thaliana (Mouse-ear cress)).